The primary structure comprises 348 residues: 4-hydroxy-3-methylbut-2-enyl diphosphate reductase (348 aa).

Cys21 serves as a coordination point for [4Fe-4S] cluster. (2E)-4-hydroxy-3-methylbut-2-enyl diphosphate-binding residues include His50 and His86. Residues His50 and His86 each coordinate dimethylallyl diphosphate. 2 residues coordinate isopentenyl diphosphate: His50 and His86. Position 108 (Cys108) interacts with [4Fe-4S] cluster. His136 is a binding site for (2E)-4-hydroxy-3-methylbut-2-enyl diphosphate. Dimethylallyl diphosphate is bound at residue His136. His136 contacts isopentenyl diphosphate. Glu138 acts as the Proton donor in catalysis. Residue Thr177 participates in (2E)-4-hydroxy-3-methylbut-2-enyl diphosphate binding. Position 207 (Cys207) interacts with [4Fe-4S] cluster. (2E)-4-hydroxy-3-methylbut-2-enyl diphosphate is bound by residues Ser235, Ser236, Asn237, and Ser280. Ser235, Ser236, Asn237, and Ser280 together coordinate dimethylallyl diphosphate. Isopentenyl diphosphate contacts are provided by Ser235, Ser236, Asn237, and Ser280.

The protein belongs to the IspH family. It depends on [4Fe-4S] cluster as a cofactor.

It catalyses the reaction isopentenyl diphosphate + 2 oxidized [2Fe-2S]-[ferredoxin] + H2O = (2E)-4-hydroxy-3-methylbut-2-enyl diphosphate + 2 reduced [2Fe-2S]-[ferredoxin] + 2 H(+). It carries out the reaction dimethylallyl diphosphate + 2 oxidized [2Fe-2S]-[ferredoxin] + H2O = (2E)-4-hydroxy-3-methylbut-2-enyl diphosphate + 2 reduced [2Fe-2S]-[ferredoxin] + 2 H(+). It functions in the pathway isoprenoid biosynthesis; dimethylallyl diphosphate biosynthesis; dimethylallyl diphosphate from (2E)-4-hydroxy-3-methylbutenyl diphosphate: step 1/1. It participates in isoprenoid biosynthesis; isopentenyl diphosphate biosynthesis via DXP pathway; isopentenyl diphosphate from 1-deoxy-D-xylulose 5-phosphate: step 6/6. Its function is as follows. Catalyzes the conversion of 1-hydroxy-2-methyl-2-(E)-butenyl 4-diphosphate (HMBPP) into a mixture of isopentenyl diphosphate (IPP) and dimethylallyl diphosphate (DMAPP). Acts in the terminal step of the DOXP/MEP pathway for isoprenoid precursor biosynthesis. The sequence is that of 4-hydroxy-3-methylbut-2-enyl diphosphate reductase from Agrobacterium fabrum (strain C58 / ATCC 33970) (Agrobacterium tumefaciens (strain C58)).